The following is a 646-amino-acid chain: Phosphomethylpyrimidine synthase (646 aa).

Substrate is bound by residues asparagine 235, methionine 264, tyrosine 293, histidine 329, 349–351 (SRG), 390–393 (DGLR), and glutamate 429. Histidine 433 serves as a coordination point for Zn(2+). Tyrosine 456 contacts substrate. Histidine 497 serves as a coordination point for Zn(2+). Positions 577, 580, and 585 each coordinate [4Fe-4S] cluster. The disordered stretch occupies residues 624–646 (KSEEFRATGSELYHPAVHAEADE).

It belongs to the ThiC family. In terms of assembly, homodimer. It depends on [4Fe-4S] cluster as a cofactor.

It catalyses the reaction 5-amino-1-(5-phospho-beta-D-ribosyl)imidazole + S-adenosyl-L-methionine = 4-amino-2-methyl-5-(phosphooxymethyl)pyrimidine + CO + 5'-deoxyadenosine + formate + L-methionine + 3 H(+). The protein operates within cofactor biosynthesis; thiamine diphosphate biosynthesis. Functionally, catalyzes the synthesis of the hydroxymethylpyrimidine phosphate (HMP-P) moiety of thiamine from aminoimidazole ribotide (AIR) in a radical S-adenosyl-L-methionine (SAM)-dependent reaction. The polypeptide is Phosphomethylpyrimidine synthase (Vibrio parahaemolyticus serotype O3:K6 (strain RIMD 2210633)).